The primary structure comprises 605 residues: Glucose oxidase (605 aa).

The signal sequence occupies residues 1-18; it reads MVSVFLSTLLLAAATVQA. Positions 52, 53, and 73 each coordinate FAD. N-linked (GlcNAc...) asparagine glycosylation is present at Asn111. Residues Ser125, Asn129, Gly130, and Ser132 each coordinate FAD. N-linked (GlcNAc...) asparagine glycosylation is found at Asn183 and Asn190. Cys186 and Cys228 form a disulfide bridge. Val272 serves as a coordination point for FAD. N-linked (GlcNAc...) asparagine glycosylation is found at Asn335, Asn375, Asn410, and Asn519. His538 (proton acceptor) is an active-site residue. The O2 site is built by Lys559 and Val560. Gly571 and Met583 together coordinate FAD.

Belongs to the GMC oxidoreductase family. As to quaternary structure, homodimer. FAD serves as cofactor.

Its subcellular location is the secreted. The protein localises to the cell wall. It is found in the cytoplasmic vesicle. The catalysed reaction is beta-D-glucose + O2 = D-glucono-1,5-lactone + H2O2. In terms of biological role, glucose oxidase catalyzes the oxidation of beta-D-glucose to D-glucono-delta-lactone and hydrogen peroxide in the presence of molecular oxygen. D-glucono-delta-lactone is sequentially hydrolyzed by lactonase to D-gluconic acid, and the resulting hydrogen peroxide is hydrolyzed by catalase to oxygen and water. Glucose oxidase alone indirectly causes toxicity in the presence of glucose and is the active compound of the antifungal antibiotic talaron. Responsible for inhibition of germination of microsclerotia of Verticillium dahliae. The protein is Glucose oxidase of Talaromyces flavus.